The primary structure comprises 290 residues: Nitrogenase iron protein 2 (290 aa).

Gly10–Ser17 provides a ligand contact to ATP. Residue Cys98 participates in [4Fe-4S] cluster binding. Arg101 bears the ADP-ribosylarginine; by dinitrogenase reductase ADP-ribosyltransferase mark. Cys133 is a binding site for [4Fe-4S] cluster.

This sequence belongs to the NifH/BchL/ChlL family. As to quaternary structure, homodimer. Requires [4Fe-4S] cluster as cofactor. The reversible ADP-ribosylation of Arg-101 inactivates the nitrogenase reductase and regulates nitrogenase activity.

The enzyme catalyses N2 + 8 reduced [2Fe-2S]-[ferredoxin] + 16 ATP + 16 H2O = H2 + 8 oxidized [2Fe-2S]-[ferredoxin] + 2 NH4(+) + 16 ADP + 16 phosphate + 6 H(+). Its function is as follows. The key enzymatic reactions in nitrogen fixation are catalyzed by the nitrogenase complex, which has 2 components: the iron protein (component 2) and a component 1 which is either a molybdenum-iron protein, a vanadium-iron, or an iron-iron protein. In Azotobacter vinelandii, this protein is Nitrogenase iron protein 2 (vnfH).